Here is a 109-residue protein sequence, read N- to C-terminus: Nucleoid-associated protein VV1_2004 (109 aa).

It belongs to the YbaB/EbfC family. In terms of assembly, homodimer.

Its subcellular location is the cytoplasm. It is found in the nucleoid. In terms of biological role, binds to DNA and alters its conformation. May be involved in regulation of gene expression, nucleoid organization and DNA protection. The chain is Nucleoid-associated protein VV1_2004 from Vibrio vulnificus (strain CMCP6).